We begin with the raw amino-acid sequence, 663 residues long: Oxytetracycline resistance protein (663 aa).

The 252-residue stretch at 1–252 (MNKLNLGILA…GIRELLPSVH (252 aa)) folds into the tr-type G domain. Residues 10 to 17 (AHVDAGKT), 74 to 78 (DTPGH), and 128 to 131 (NKID) contribute to the GTP site.

The protein belongs to the TRAFAC class translation factor GTPase superfamily. Classic translation factor GTPase family. TetM/TetO subfamily.

In terms of biological role, abolishes the inhibitory effect of oxytetracycline on protein synthesis by a non-covalent modification of the ribosomes. The polypeptide is Oxytetracycline resistance protein (otrA) (Streptomyces rimosus).